The primary structure comprises 277 residues: MSSCSRVALVTGANRGIGLAIARELCRQFSGDVVLTARDVARGQAAVQQLQAEGLSPRFHQLDIDDLQSIRALRDFLRKEYGGLNVLVNNAAVAFKSDDPMPFDIKAEMTLKTNFFATRNMCNELLPIMKPHGRVVNISSLQCLRAFENCSEDLQERFHSETLTEGDLVDLMKKFVEDTKNEVHEREGWPNSPYGVSKLGVTVLSRILARRLDEKRKADRILVNACCPGPVKTDMDGKDSIRTVEEGAETPVYLALLPPDATEPQGQLVHDKVVQNW.

S2 carries the post-translational modification N-acetylserine. Residues 10 to 34, 38 to 42, 63 to 64, and N90 each bind NADP(+); these read VTGA…GDVV, RDVAR, and DI. Position 30 is a phosphoserine (S30). Residue S140 participates in substrate binding. Y194 acts as the Proton acceptor in catalysis. Residues 194-198 and D239 each bind NADP(+); that span reads YGVSK.

Belongs to the short-chain dehydrogenases/reductases (SDR) family. In terms of tissue distribution, detected in ovary, pancreas, intestine, colon, kidney, brain, thymus, lung, heart, liver, spleen, leukocyte, prostate and testis.

The protein localises to the cytoplasm. It catalyses the reaction a secondary alcohol + NADP(+) = a ketone + NADPH + H(+). The enzyme catalyses a quinone + NADPH + H(+) = a quinol + NADP(+). Its function is as follows. Catalyzes the NADPH-dependent reduction of carbonyl compounds to their corresponding alcohols. Has low NADPH-dependent oxidoreductase activity. Acts on several orthoquinones, acts as well on non-quinone compounds, such as isatin or on the anticancer drug oracin. Best substrates for CBR3 is 1,2- naphthoquinone, hence could play a role in protection against cytotoxicity of exogenous quinones. Exerts activity toward ortho-quinones but not paraquinones. No endogenous substrate for CBR3 except isatin has been identified. This is Carbonyl reductase [NADPH] 3 from Homo sapiens (Human).